A 501-amino-acid chain; its full sequence is Ribose import ATP-binding protein RbsA (501 aa).

2 consecutive ABC transporter domains span residues 5 to 241 and 252 to 495; these read LQLQ…VGRK and APGE…VGKQ. Residue 37–44 coordinates ATP; sequence GENGAGKS.

Belongs to the ABC transporter superfamily. Ribose importer (TC 3.A.1.2.1) family. The complex is composed of an ATP-binding protein (RbsA), two transmembrane proteins (RbsC) and a solute-binding protein (RbsB).

It localises to the cell inner membrane. The enzyme catalyses D-ribose(out) + ATP + H2O = D-ribose(in) + ADP + phosphate + H(+). In terms of biological role, part of the ABC transporter complex RbsABC involved in ribose import. Responsible for energy coupling to the transport system. This Pectobacterium atrosepticum (strain SCRI 1043 / ATCC BAA-672) (Erwinia carotovora subsp. atroseptica) protein is Ribose import ATP-binding protein RbsA.